The primary structure comprises 192 residues: Interferon epsilon (192 aa).

The first 21 residues, 1–21, serve as a signal peptide directing secretion; that stretch reads MVHRQLPETVLLLLVSSTIFS. Cys52 and Cys162 are oxidised to a cystine.

Belongs to the alpha/beta interferon family. In terms of tissue distribution, expressed at very high levels in uterus and, at much lower levels, in ovary and cervix. Very low levels, if any, in other organs. In the endometrium, expressed in the luminal and glandular epithelial cells (at protein level).

It localises to the secreted. Its function is as follows. Type I interferon required for maintaining basal levels of IFN-regulated genes, including 2'-5'-oligoadenylate synthetase, IRF7 and ISG15, in the female reproductive tract. Directly mediates protection against viral, including HSV-2, and bacterial, including Chlamydia muridarum, genital infections. The chain is Interferon epsilon (Ifne) from Mus musculus (Mouse).